The chain runs to 431 residues: uncharacterized protein (431 aa).

A run of 2 helical transmembrane segments spans residues L42 to L62 and V74 to L94. N-linked (GlcNAc...) asparagine; by host glycosylation occurs at N105. Helical transmembrane passes span L111 to I131, A153 to P173, M202 to Y222, V236 to L256, and A279 to F299.

It is found in the membrane. This is an uncharacterized protein from Homo sapiens (Human).